The following is a 649-amino-acid chain: MSSRKQARLEAKNFIDSLSVQPYPNSKKAYIQGSREDIQVPVREISLADSLVGGTKKEPVFEPNVPIQVYDTSGVYTDPTHQIDLYSGLPKLREQWIDERGDTELLDDVSSVYTKERLEDETLDDLRYGNLPRIRRATDEQCVTQLHYARQGIITPEMEYIAIRENMGRQKFADEQLNHQHPGHNFGANLPKEITPEFVRKEVAEGRAIIPSNINHPESEPMIIGRNFLVKVNANIGNSSVSSSIEEEVEKLVWSTRWGGDTVMDLSTGRNIHETREWILRNSPVPIGTVPMYQALEKVNGVAEDLNWEVMRDTLIEQAEQGVDYFTIHAGLLLRYVPMTAKRVTGIVSRGGSIIAKWCLAHHQESFLYTHFREICEICAKYDVALSLGDGLRPGSIADANDEAQFSELRTLGELTKVAWEYDVQVIIEGPGHVPMHLIKENMDEQLEHCHEAPFYTLGPLTTDIAPGYDHITSGIGAAMIGWYGCAMLCYVTPKEHLGLPNKEDVKTGLITYKLAAHAADLAKGHPGAQIRDNALSKARFEFRWEDQFNLALDPETARSFHDETLPQESGKVAHFCSMCGPKFCSMKISQEVREYAKDTEQVAADQAIEIKMLDNPLEGMRQKSQEFRDTGSELYHPAVGAKEAQLEE.

Substrate is bound by residues asparagine 235, methionine 264, tyrosine 293, histidine 329, 349–351 (SRG), 390–393 (DGLR), and glutamate 429. Position 433 (histidine 433) interacts with Zn(2+). Position 456 (tyrosine 456) interacts with substrate. Position 497 (histidine 497) interacts with Zn(2+). The [4Fe-4S] cluster site is built by cysteine 577, cysteine 580, and cysteine 585. The disordered stretch occupies residues 620 to 649 (GMRQKSQEFRDTGSELYHPAVGAKEAQLEE). Residues 621-632 (MRQKSQEFRDTG) are compositionally biased toward basic and acidic residues.

Belongs to the ThiC family. As to quaternary structure, homodimer. It depends on [4Fe-4S] cluster as a cofactor.

It carries out the reaction 5-amino-1-(5-phospho-beta-D-ribosyl)imidazole + S-adenosyl-L-methionine = 4-amino-2-methyl-5-(phosphooxymethyl)pyrimidine + CO + 5'-deoxyadenosine + formate + L-methionine + 3 H(+). It participates in cofactor biosynthesis; thiamine diphosphate biosynthesis. Its function is as follows. Catalyzes the synthesis of the hydroxymethylpyrimidine phosphate (HMP-P) moiety of thiamine from aminoimidazole ribotide (AIR) in a radical S-adenosyl-L-methionine (SAM)-dependent reaction. The protein is Phosphomethylpyrimidine synthase of Vibrio atlanticus (strain LGP32) (Vibrio splendidus (strain Mel32)).